The sequence spans 334 residues: Petrobactin import system permease protein FatD (334 aa).

The next 9 membrane-spanning stretches (helical) occupy residues 24–44 (FIIAIIVVIILGIISLFTGVY), 64–84 (TVALMLTGAAMAMAGLVMQLI), 98–118 (IEWSSLGLLFVYLLFPAPTLV), 119–139 (QRMTGAIIFSFIGTMIFFLFL), 152–172 (IIGLMLGAVISAVSTFLGLLF), 197–217 (LWLIVIVTLLIFMYANRLTLA), 234–254 (IVLFGTALISVAVGIVAAVIG), 277–297 (SNLPWVCVIGMGTITACDIIS), and 304–324 (FELPVSLILASVGAVVFITIL).

The protein belongs to the binding-protein-dependent transport system permease family. FecCD subfamily. The complex is composed of two ATP-binding proteins (FatE), two transmembrane proteins (FatC and FatD) and a solute-binding protein (FpuA).

The protein resides in the cell membrane. Functionally, part of an ABC transporter complex involved in ferric-petrobactin uptake. Probably responsible for the translocation of the substrate across the membrane. The chain is Petrobactin import system permease protein FatD from Bacillus anthracis.